A 169-amino-acid polypeptide reads, in one-letter code: Large ribosomal subunit protein uL10 (169 aa).

The protein belongs to the universal ribosomal protein uL10 family. Part of the ribosomal stalk of the 50S ribosomal subunit. The N-terminus interacts with L11 and the large rRNA to form the base of the stalk. The C-terminus forms an elongated spine to which L12 dimers bind in a sequential fashion forming a multimeric L10(L12)X complex.

Its function is as follows. Forms part of the ribosomal stalk, playing a central role in the interaction of the ribosome with GTP-bound translation factors. The chain is Large ribosomal subunit protein uL10 from Onion yellows phytoplasma (strain OY-M).